A 269-amino-acid chain; its full sequence is Phosphatidylglycerophosphate phosphatase 1, chloroplastic (269 aa).

Residues 1 to 33 (MRSVPGPSPPCTRSLAHSCRAAARGPCGSARPR) constitute a chloroplast transit peptide. Residues 25–46 (GPCGSARPRARSVSARAHSSEA) are disordered. A compositionally biased stretch (low complexity) spans 29 to 46 (SARPRARSVSARAHSSEA). Positions 103–107 (DKDNT) match the Phosphoryl acceptor motif.

Belongs to the HAD-like hydrolase superfamily.

It localises to the plastid. Its subcellular location is the chloroplast. The catalysed reaction is a 1,2-diacyl-sn-glycero-3-phospho-(1'-sn-glycero-3'-phosphate) + H2O = a 1,2-diacyl-sn-glycero-3-phospho-(1'-sn-glycerol) + phosphate. It participates in phospholipid metabolism; phosphatidylglycerol biosynthesis; phosphatidylglycerol from CDP-diacylglycerol: step 2/2. Functionally, phosphatidylglycerophosphate phosphatase involved in the biosynthesis of phosphatidylglycerol (PG), a phosphoglycerolipid predominantly present in chloroplastic thylakoid membranes and which has important photosynthetic function. Required for thylakoid membranes development and chloroplast function. The sequence is that of Phosphatidylglycerophosphate phosphatase 1, chloroplastic from Chlamydomonas reinhardtii (Chlamydomonas smithii).